The following is a 104-amino-acid chain: Cytochrome c-551 (104 aa).

An N-terminal signal peptide occupies residues 1-22 (MKPYALLSLLATGTLLAQGAWA). Residues Cys34, Cys37, His38, and Met83 each contribute to the heme c site.

Post-translationally, binds 1 heme c group covalently per subunit.

The protein localises to the periplasm. Functionally, electron donor for cytochrome cd1 in nitrite and nitrate respiration. In Pseudomonas aeruginosa (strain ATCC 15692 / DSM 22644 / CIP 104116 / JCM 14847 / LMG 12228 / 1C / PRS 101 / PAO1), this protein is Cytochrome c-551 (nirM).